Reading from the N-terminus, the 394-residue chain is Elongation factor Tu (394 aa).

The 195-residue stretch at 10–204 folds into the tr-type G domain; sequence KPHVNVGTIG…ALDTYIPEPE (195 aa). The tract at residues 19–26 is G1; that stretch reads GHVDHGKT. 19–26 lines the GTP pocket; that stretch reads GHVDHGKT. Thr26 is a binding site for Mg(2+). Residues 60–64 form a G2 region; sequence GITIA. The G3 stretch occupies residues 81-84; it reads DCPG. Residues 81–85 and 136–139 each bind GTP; these read DCPGH and NKCD. The G4 stretch occupies residues 136-139; the sequence is NKCD. A G5 region spans residues 174–176; the sequence is SAL.

Belongs to the TRAFAC class translation factor GTPase superfamily. Classic translation factor GTPase family. EF-Tu/EF-1A subfamily. Monomer.

Its subcellular location is the cytoplasm. It catalyses the reaction GTP + H2O = GDP + phosphate + H(+). In terms of biological role, GTP hydrolase that promotes the GTP-dependent binding of aminoacyl-tRNA to the A-site of ribosomes during protein biosynthesis. This is Elongation factor Tu from Vibrio parahaemolyticus serotype O3:K6 (strain RIMD 2210633).